The sequence spans 272 residues: Soluble interferon gamma receptor OPG193 (272 aa).

The first 13 residues, 1 to 13 (MRYIIILAVLFIN), serve as a signal peptide directing secretion. N42, N150, and N267 each carry an N-linked (GlcNAc...) asparagine; by host glycan.

The protein belongs to the type II cytokine receptor family. Homodimer. Interacts with host IFNG.

Its subcellular location is the secreted. Functionally, counteracts the antiviral effects of host IFN-gamma. Acts as a soluble IFN-gamma receptor and thus inhibits the interaction between host IFN-gamma and its receptor. The chain is Soluble interferon gamma receptor OPG193 (OPG193) from Homo sapiens (Human).